Here is a 303-residue protein sequence, read N- to C-terminus: Aspartate carbamoyltransferase catalytic subunit (303 aa).

Residues R51 and T52 each coordinate carbamoyl phosphate. K80 provides a ligand contact to L-aspartate. Carbamoyl phosphate contacts are provided by R101, H129, and Q132. 2 residues coordinate L-aspartate: R162 and R221. Residues L260 and P261 each coordinate carbamoyl phosphate.

The protein belongs to the aspartate/ornithine carbamoyltransferase superfamily. ATCase family. Heterooligomer of catalytic and regulatory chains.

The catalysed reaction is carbamoyl phosphate + L-aspartate = N-carbamoyl-L-aspartate + phosphate + H(+). Its pathway is pyrimidine metabolism; UMP biosynthesis via de novo pathway; (S)-dihydroorotate from bicarbonate: step 2/3. In terms of biological role, catalyzes the condensation of carbamoyl phosphate and aspartate to form carbamoyl aspartate and inorganic phosphate, the committed step in the de novo pyrimidine nucleotide biosynthesis pathway. The sequence is that of Aspartate carbamoyltransferase catalytic subunit from Saccharolobus islandicus (strain M.16.27) (Sulfolobus islandicus).